The following is a 486-amino-acid chain: MNRILSSASLLSNVSMPRQNKHKITKALCYAIIVASIGSIQFGYHLSELNAPQQVLSCSEFDIPMEGYPYDRTWLGKRGYKQCIPLNDEQIGIVTSVFCIGGILGSYFATSLANIYGRKFSSLINCTLNIVGSLIIFNSNSYRGLIIGRILVGISCGSLIVIIPLFIKEVAPSGWEGLLGSMTQICIRLGVLLTQGIALPLTDSYRWRWILFGSFLIAVLNFFMWFIVDESPKWLLAHGRVTDAKLSLCKLRGVTFDEAAQEIQDWQLQIESGDPLIEPTTTNSISGSNSLWKYLRDRTNVKSRHVITVLLFGQQFCGINSIVLYGTKIISQLYPQHAIRINFFISMVNVLVTILVSLLIHSLPRKPLLMTSTVLVSVTAFIMGIAMNHNKMNLLIVFSFIYMGVFTMGLNPLPFIIMREVSKPQDMVLAQRYGTICNWVGTFIIAYTFPIIHDVLSGYVFIIFAIIACSISAFIWKKVPETKRSG.

Over 1–26 (MNRILSSASLLSNVSMPRQNKHKITK) the chain is Cytoplasmic. The helical transmembrane segment at 27 to 47 (ALCYAIIVASIGSIQFGYHLS) threads the bilayer. Over 48-90 (ELNAPQQVLSCSEFDIPMEGYPYDRTWLGKRGYKQCIPLNDEQ) the chain is Mitochondrial intermembrane. A helical membrane pass occupies residues 91 to 111 (IGIVTSVFCIGGILGSYFATS). The Cytoplasmic segment spans residues 112 to 119 (LANIYGRK). Residues 120 to 140 (FSSLINCTLNIVGSLIIFNSN) traverse the membrane as a helical segment. Topologically, residues 141–146 (SYRGLI) are mitochondrial intermembrane. The chain crosses the membrane as a helical span at residues 147 to 167 (IGRILVGISCGSLIVIIPLFI). Residues 168 to 178 (KEVAPSGWEGL) are Cytoplasmic-facing. The chain crosses the membrane as a helical span at residues 179–199 (LGSMTQICIRLGVLLTQGIAL). Residues 200-208 (PLTDSYRWR) are Mitochondrial intermembrane-facing. Residues 209–229 (WILFGSFLIAVLNFFMWFIVD) form a helical membrane-spanning segment. Topologically, residues 230 to 305 (ESPKWLLAHG…RDRTNVKSRH (76 aa)) are cytoplasmic. Residues 306–326 (VITVLLFGQQFCGINSIVLYG) form a helical membrane-spanning segment. Topologically, residues 327–342 (TKIISQLYPQHAIRIN) are mitochondrial intermembrane. The chain crosses the membrane as a helical span at residues 343-363 (FFISMVNVLVTILVSLLIHSL). Residues 364-366 (PRK) are Cytoplasmic-facing. A helical membrane pass occupies residues 367–387 (PLLMTSTVLVSVTAFIMGIAM). Over 388 to 396 (NHNKMNLLI) the chain is Mitochondrial intermembrane. Residues 397 to 417 (VFSFIYMGVFTMGLNPLPFII) form a helical membrane-spanning segment. At 418–432 (MREVSKPQDMVLAQR) the chain is on the cytoplasmic side. The chain crosses the membrane as a helical span at residues 433–453 (YGTICNWVGTFIIAYTFPIIH). Residue Asp454 is a topological domain, mitochondrial intermembrane. The chain crosses the membrane as a helical span at residues 455–475 (VLSGYVFIIFAIIACSISAFI). At 476–486 (WKKVPETKRSG) the chain is on the cytoplasmic side.

It belongs to the major facilitator superfamily. Sugar transporter (TC 2.A.1.1) family.

Its subcellular location is the mitochondrion membrane. Functionally, may be involved in vacuolar protein sorting. This is Vacuolar protein sorting-associated protein 73 (VPS73) from Saccharomyces cerevisiae (strain ATCC 204508 / S288c) (Baker's yeast).